We begin with the raw amino-acid sequence, 227 residues long: Cytidylate kinase (227 aa).

G7–T15 is an ATP binding site.

The protein belongs to the cytidylate kinase family. Type 1 subfamily.

The protein localises to the cytoplasm. The catalysed reaction is CMP + ATP = CDP + ADP. It carries out the reaction dCMP + ATP = dCDP + ADP. The polypeptide is Cytidylate kinase (Salinibacter ruber (strain DSM 13855 / M31)).